We begin with the raw amino-acid sequence, 124 residues long: Glycine cleavage system H protein (124 aa).

Residues 22–104 (LVITGITDHA…YGKGWIYKIK (83 aa)) form the Lipoyl-binding domain. Lys-63 carries the N6-lipoyllysine modification.

This sequence belongs to the GcvH family. The glycine cleavage system is composed of four proteins: P, T, L and H. Requires (R)-lipoate as cofactor.

Functionally, the glycine cleavage system catalyzes the degradation of glycine. The H protein shuttles the methylamine group of glycine from the P protein to the T protein. This chain is Glycine cleavage system H protein, found in Acinetobacter baumannii (strain SDF).